An 85-amino-acid polypeptide reads, in one-letter code: Large ribosomal subunit protein bL31B (85 aa).

This sequence belongs to the bacterial ribosomal protein bL31 family. Type B subfamily. In terms of assembly, part of the 50S ribosomal subunit.

This chain is Large ribosomal subunit protein bL31B, found in Bifidobacterium longum subsp. infantis (strain ATCC 15697 / DSM 20088 / JCM 1222 / NCTC 11817 / S12).